The following is a 212-amino-acid chain: ER lumen protein-retaining receptor 2 (212 aa).

The Lumenal segment spans residues 1–4 (MNVF). The helical transmembrane segment at 5 to 24 (RLSGDLCHLAAIIILLLKIW) threads the bilayer. Residues 25 to 32 (NSRSCAGI) are Cytoplasmic-facing. The helical transmembrane segment at 33–52 (SGKSQLLFAMVFTTRYLDLF) threads the bilayer. The tract at residues 47-48 (RY) is interaction with the K-D-E-L motif on target proteins. Residues 53-58 (TSFISL) are Lumenal-facing. Residues 59–79 (YNTSMKVIYMGCAYATVYLIY) form a helical membrane-spanning segment. Residues 80-92 (MKFKATYDGNHDT) are Cytoplasmic-facing. Residues 93–110 (FRVEFLVVPVGGLSVLVN) form a helical membrane-spanning segment. At 111–116 (HDFSPL) the chain is on the lumenal side. The chain crosses the membrane as a helical span at residues 117–135 (EILWTFSIYLESVAILPQL). Topologically, residues 136-149 (FMISKTGEAETITT) are cytoplasmic. A helical membrane pass occupies residues 150 to 168 (HYLFFLGLYRALYLFNWIW). The tract at residues 159–169 (RALYLFNWIWR) is interaction with the K-D-E-L motif on target proteins. The Lumenal segment spans residues 169-178 (RFSFEGFFDL). Residues 179-199 (IAIVAGVVQTILYCDFFYLYV) traverse the membrane as a helical segment. Residues 200 to 212 (TKVLKGKKLSLPA) are Cytoplasmic-facing. The segment at 204–207 (KGKK) is important for recycling of cargo proteins with the sequence motif K-D-E-L from the Golgi to the endoplasmic reticulum.

Belongs to the ERD2 family.

It is found in the endoplasmic reticulum membrane. Its subcellular location is the golgi apparatus membrane. The protein localises to the cytoplasmic vesicle. The protein resides in the COPI-coated vesicle membrane. Functionally, receptor for the C-terminal sequence motif K-D-E-L that is present on endoplasmic reticulum resident proteins and that mediates their recycling from the Golgi back to the endoplasmic reticulum. Binding is pH dependent, and is optimal at pH 5-5.4. The sequence is that of ER lumen protein-retaining receptor 2 (kdelr2) from Xenopus laevis (African clawed frog).